Here is a 475-residue protein sequence, read N- to C-terminus: Beta-amyrin 28-monooxygenase (475 aa).

Residues 2–22 form a helical membrane-spanning segment; the sequence is YLTILFLFVSSILLSLMFLLR. Cys-422 contributes to the heme binding site.

Belongs to the cytochrome P450 family. Heme is required as a cofactor.

The protein localises to the membrane. The enzyme catalyses beta-amyrin + 3 reduced [NADPH--hemoprotein reductase] + 3 O2 = oleanolate + 3 oxidized [NADPH--hemoprotein reductase] + 4 H2O + 4 H(+). In terms of biological role, catalyzes the oxidation of the methyl group to a carboxyl group at the C-28 position of beta-amyrin to form oleanolate. The protein is Beta-amyrin 28-monooxygenase of Barbarea vulgaris (Yellow rocket).